Reading from the N-terminus, the 1183-residue chain is SRC kinase signaling inhibitor 1 (1183 aa).

The disordered stretch occupies residues 1–44 (MGNAPSQDPERSSPPMLSADDAEYPREYRTLGGGGGGGSGGRRF). S13 and S18 each carry phosphoserine. Residues 31–41 (LGGGGGGGSGG) are compositionally biased toward gly residues. A Phosphoserine modification is found at S45. Position 52 is a phosphothreonine (T52). 7 positions are modified to phosphoserine: S53, S64, S143, S165, S169, S179, and S225. Y241 is subject to Phosphotyrosine. The segment at 284–379 (ASRESSPTRR…ERRDVKPDED (96 aa)) is disordered. A compositionally biased stretch (polar residues) spans 286–296 (RESSPTRRLNN). Over residues 297 to 306 (LSPAPHLASG) the composition is skewed to low complexity. S298, S307, and S324 each carry phosphoserine. The span at 313–331 (PSGLPSGLQSGSPSRSRLS) shows a compositional bias: low complexity. 2 positions are modified to omega-N-methylarginine: R329 and R336. A phosphoserine mark is found at S343, S362, and S364. Residues 369–379 (LERRDVKPDED) are compositionally biased toward basic and acidic residues. Y396 carries the post-translational modification Phosphotyrosine. The segment at 466-643 (YGFRLPPSSP…ASSTPAGQPT (178 aa)) is disordered. Positions 485-497 (PGGPPPPHSPYSG) are enriched in pro residues. Phosphoserine is present on residues S493, S496, and S500. R501 is subject to Omega-N-methylarginine. Residues S503, S513, S515, S517, and S522 each carry the phosphoserine modification. Over residues 524–541 (GGKTRSAGSASTAGAPPS) the composition is skewed to low complexity. A compositionally biased stretch (basic and acidic residues) spans 562-574 (KDTETRERMEAME). Phosphoserine occurs at positions 598 and 621. Residues T624 and T637 each carry the phosphothreonine modification. Low complexity predominate over residues 634–643 (ASSTPAGQPT). The segment at 647 to 697 (RLQMQLHLRGLQNSASDLRGQLQQLRKLQLQNQESVRALLKRTEAELSMRV) is interaction with SNAP25. 2 coiled-coil regions span residues 654–674 (LRGL…LRKL) and 726–746 (EELI…IQRD). 3 positions are modified to phosphoserine: S844, S857, and S866. 2 disordered regions span residues 861–907 (EMPP…KAVS) and 949–1032 (DCAS…VTSK). T884 bears the Phosphothreonine mark. S987 carries the post-translational modification Phosphoserine. Positions 1002–1011 (KSPPPPPPRR) are enriched in pro residues. Phosphoserine is present on residues S1043 and S1060. 2 disordered regions span residues 1058–1081 (AVSE…DEDD) and 1105–1183 (GASR…SISF). The segment covering 1135-1183 (QAQQQATKPSKEMSGSNETSSPVSEKPSASRTSIPVLTSFGARNSSISF) has biased composition (polar residues).

It belongs to the SRCIN1 family. As to quaternary structure, interacts with the N-terminal coiled-coil region of SNAP25. Interacts with BCAR1/p130Cas and SRC through its C-terminal domain. Interacts with CSK, CTTN, SORBS3/vinexin, SYP and MAPRE3/EB3. Post-translationally, tyrosine-phosphorylated in response to EGF and to cell adhesion to integrin ligands. In terms of tissue distribution, expressed in some primary breast carcinomas where its presence is significantly associated with increased tumor size. Not detected in normal breast tissue.

It is found in the cytoplasm. The protein resides in the cytoskeleton. The protein localises to the cell projection. Its subcellular location is the axon. It localises to the dendrite. It is found in the presynapse. The protein resides in the postsynapse. The protein localises to the postsynaptic density. In terms of biological role, acts as a negative regulator of SRC by activating CSK which inhibits SRC activity and downstream signaling, leading to impaired cell spreading and migration. Regulates dendritic spine morphology. Involved in calcium-dependent exocytosis. May play a role in neurotransmitter release or synapse maintenance. The polypeptide is SRC kinase signaling inhibitor 1 (Homo sapiens (Human)).